The chain runs to 364 residues: Methylthioribose-1-phosphate isomerase (364 aa).

Substrate-binding positions include 49-51 (RGA), Arg-89, and Gln-201. Asp-242 (proton donor) is an active-site residue. 252-253 (NK) is a binding site for substrate.

This sequence belongs to the eIF-2B alpha/beta/delta subunits family. MtnA subfamily.

It carries out the reaction 5-(methylsulfanyl)-alpha-D-ribose 1-phosphate = 5-(methylsulfanyl)-D-ribulose 1-phosphate. It functions in the pathway amino-acid biosynthesis; L-methionine biosynthesis via salvage pathway; L-methionine from S-methyl-5-thio-alpha-D-ribose 1-phosphate: step 1/6. Functionally, catalyzes the interconversion of methylthioribose-1-phosphate (MTR-1-P) into methylthioribulose-1-phosphate (MTRu-1-P). The polypeptide is Methylthioribose-1-phosphate isomerase (Leptospira interrogans serogroup Icterohaemorrhagiae serovar copenhageni (strain Fiocruz L1-130)).